Here is a 209-residue protein sequence, read N- to C-terminus: Large ribosomal subunit protein uL3 (209 aa).

It belongs to the universal ribosomal protein uL3 family. As to quaternary structure, part of the 50S ribosomal subunit. Forms a cluster with proteins L14 and L19.

In terms of biological role, one of the primary rRNA binding proteins, it binds directly near the 3'-end of the 23S rRNA, where it nucleates assembly of the 50S subunit. This Oceanobacillus iheyensis (strain DSM 14371 / CIP 107618 / JCM 11309 / KCTC 3954 / HTE831) protein is Large ribosomal subunit protein uL3.